Consider the following 231-residue polypeptide: MAKLTKRQRAINEKVDGSKQYSIDDAVALLKELSNVKFAETVDVSINLGIDPRKSDQSVRGATTLPHGNGKDVRVAVFTQGANAEAAKAAGAEFVGMDELAAEIKAGKMDFDVVIASPDAMRVVGQLGQVLGPRGLMPNPKTGTVTPDVVTAVKNAKAGQVRYRAEKGGIIHGGIGKISFETVALKENLEALISDLKKAKPASSKGVYLKKVTLSTTMGPGLVIDQSSLAV.

Belongs to the universal ribosomal protein uL1 family. As to quaternary structure, part of the 50S ribosomal subunit.

In terms of biological role, binds directly to 23S rRNA. The L1 stalk is quite mobile in the ribosome, and is involved in E site tRNA release. Its function is as follows. Protein L1 is also a translational repressor protein, it controls the translation of the L11 operon by binding to its mRNA. This Cellvibrio japonicus (strain Ueda107) (Pseudomonas fluorescens subsp. cellulosa) protein is Large ribosomal subunit protein uL1.